Reading from the N-terminus, the 113-residue chain is ATP-dependent Clp protease adapter protein ClpS (113 aa).

Residues 1–24 (MTAQLHMMSDKHDQDNDASVLLQT) are disordered.

Belongs to the ClpS family. As to quaternary structure, binds to the N-terminal domain of the chaperone ClpA.

Its function is as follows. Involved in the modulation of the specificity of the ClpAP-mediated ATP-dependent protein degradation. The chain is ATP-dependent Clp protease adapter protein ClpS from Ruegeria pomeroyi (strain ATCC 700808 / DSM 15171 / DSS-3) (Silicibacter pomeroyi).